Consider the following 555-residue polypeptide: Potassium-transporting ATPase potassium-binding subunit (555 aa).

Helical transmembrane passes span 2 to 22 (IWVA…PTGI), 60 to 80 (QYAL…YFIF), 130 to 150 (IGIT…VMAF), 173 to 193 (VFLP…VPQT), 246 to 266 (MSNI…PFTY), 278 to 298 (ILFV…TTSE), 374 to 394 (AGFV…GLMV), 412 to 432 (LIAV…ALAL), 483 to 503 (LVMF…AASL), and 525 to 545 (GIFI…MLVL).

Belongs to the KdpA family. The system is composed of three essential subunits: KdpA, KdpB and KdpC.

It localises to the cell membrane. In terms of biological role, part of the high-affinity ATP-driven potassium transport (or Kdp) system, which catalyzes the hydrolysis of ATP coupled with the electrogenic transport of potassium into the cytoplasm. This subunit binds the extracellular potassium ions and delivers the ions to the membrane domain of KdpB through an intramembrane tunnel. This is Potassium-transporting ATPase potassium-binding subunit from Bacillus cereus (strain G9842).